The primary structure comprises 266 residues: tRNA pseudouridine synthase A (266 aa).

Asp57 acts as the Nucleophile in catalysis. Residue Tyr115 participates in substrate binding.

This sequence belongs to the tRNA pseudouridine synthase TruA family. As to quaternary structure, homodimer.

The enzyme catalyses uridine(38/39/40) in tRNA = pseudouridine(38/39/40) in tRNA. Formation of pseudouridine at positions 38, 39 and 40 in the anticodon stem and loop of transfer RNAs. The protein is tRNA pseudouridine synthase A of Buchnera aphidicola subsp. Acyrthosiphon pisum (strain Tuc7).